The primary structure comprises 555 residues: MAMATATASSCVDATWWAYALPALLGADTLCAHPALLAGAVLLAFATAAVLAWAASPGGPAWAHGRGRLGATPIEGPRGLPVFGSIFALSRGLPHRALDAMSRDAAAPRARELMAFSVGETPAVVSSCPATAREVLAHPSFADRPLKRSARELLFARAIGFAPSGEYWRLLRRIASTHLFSPRRVAAHEPGRQADATAMLSAMAAEQSATGAVVLRPHLQAAALNNIMGSVFGRRYDVSSSSGAAADEAEQLKSMVREGFELLGAFNWSDHLPWLAHLYDPNHVARRCAALVPRVQAFVRGVIRDHRLRRDSSSTAADNADFVDVLLSLEAHENLAEDDMVAVLWEMIFRGTDTTALVTEWCMAEVVRNPAVQARLRAEVDAAVGGDGCPSDGDVARMPYLQAVVKETLRAHPPGPLLSWARLATADVGLANGMVVPAGTTAMVNMWAITHDGEVWADPEAFAPERFIPSEGGADVDVRGGDLRLAPFGAGRRVCPGKNLGLATVTLWVARLVHAFDWFLPDGSPPVSLDEVLKLSLEMKTPLAAAATPRRRRAA.

A helical membrane pass occupies residues Val-12–Ala-32. A heme-binding site is contributed by Cys-495.

Belongs to the cytochrome P450 family. The cofactor is heme. Expressed in seedlings, shoot apices and young panicles, but not in mature leaves, calli and roots.

The protein resides in the membrane. In terms of biological role, involved in the regular timing (plastochron) of lateral organs formation. May regulate the rate of leaf initiation and the duration of vegetative phase. Seems to be redundant to the function of PLASTOCHRON2, but to act in an independent pathway. In Oryza sativa subsp. japonica (Rice), this protein is Cytochrome P450 78A11 (CYP78A11).